We begin with the raw amino-acid sequence, 511 residues long: Prolyl 3-hydroxylase OGFOD1 (511 aa).

A disordered region spans residues 1-20 (MTGKRGTAAGTDGSGNKKGK). Residues 138–240 (KTVDISCAQY…RLSVSGWFHG (103 aa)) enclose the Fe2OG dioxygenase domain. Residues H156 and D158 each coordinate Fe cation. Y170 serves as a coordination point for 2-oxoglutarate. H219 contacts Fe cation. R231 is a 2-oxoglutarate binding site. Positions 372 to 403 (NEESDEGEGPSEPNTVSQQGASSEDDKVPSCS) are disordered.

The protein belongs to the TPA1 family. Monomer. It depends on Fe(2+) as a cofactor. The cofactor is L-ascorbate.

It is found in the cytoplasm. The protein localises to the nucleus. It catalyses the reaction [ribosomal protein uS12]-L-proline + 2-oxoglutarate + O2 = [ribosomal protein uS12]-(3S)-3-hydroxy-L-proline + succinate + CO2. Functionally, prolyl 3-hydroxylase that catalyzes 3-hydroxylation of 'Pro-62' of small ribosomal subunit uS12 (rps23), thereby regulating protein translation termination efficiency. Involved in stress granule formation. In Xenopus laevis (African clawed frog), this protein is Prolyl 3-hydroxylase OGFOD1 (ogfod1).